The chain runs to 249 residues: 1-(5-phosphoribosyl)-5-[(5-phosphoribosylamino)methylideneamino] imidazole-4-carboxamide isomerase (249 aa).

Aspartate 8 functions as the Proton acceptor in the catalytic mechanism. Catalysis depends on aspartate 129, which acts as the Proton donor.

The protein belongs to the HisA/HisF family.

Its subcellular location is the cytoplasm. It catalyses the reaction 1-(5-phospho-beta-D-ribosyl)-5-[(5-phospho-beta-D-ribosylamino)methylideneamino]imidazole-4-carboxamide = 5-[(5-phospho-1-deoxy-D-ribulos-1-ylimino)methylamino]-1-(5-phospho-beta-D-ribosyl)imidazole-4-carboxamide. It functions in the pathway amino-acid biosynthesis; L-histidine biosynthesis; L-histidine from 5-phospho-alpha-D-ribose 1-diphosphate: step 4/9. This chain is 1-(5-phosphoribosyl)-5-[(5-phosphoribosylamino)methylideneamino] imidazole-4-carboxamide isomerase, found in Nitratidesulfovibrio vulgaris (strain ATCC 29579 / DSM 644 / CCUG 34227 / NCIMB 8303 / VKM B-1760 / Hildenborough) (Desulfovibrio vulgaris).